The chain runs to 407 residues: Serine hydroxymethyltransferase (407 aa).

(6S)-5,6,7,8-tetrahydrofolate is bound by residues Leu-120 and 124 to 126; that span reads GHL. Position 229 is an N6-(pyridoxal phosphate)lysine (Lys-229).

Belongs to the SHMT family. Homodimer. Pyridoxal 5'-phosphate is required as a cofactor.

Its subcellular location is the cytoplasm. The catalysed reaction is (6R)-5,10-methylene-5,6,7,8-tetrahydrofolate + glycine + H2O = (6S)-5,6,7,8-tetrahydrofolate + L-serine. It participates in one-carbon metabolism; tetrahydrofolate interconversion. Its pathway is amino-acid biosynthesis; glycine biosynthesis; glycine from L-serine: step 1/1. In terms of biological role, catalyzes the reversible interconversion of serine and glycine with tetrahydrofolate (THF) serving as the one-carbon carrier. This reaction serves as the major source of one-carbon groups required for the biosynthesis of purines, thymidylate, methionine, and other important biomolecules. Also exhibits THF-independent aldolase activity toward beta-hydroxyamino acids, producing glycine and aldehydes, via a retro-aldol mechanism. The sequence is that of Serine hydroxymethyltransferase from Deinococcus deserti (strain DSM 17065 / CIP 109153 / LMG 22923 / VCD115).